The chain runs to 75 residues: Kappa-scoloptoxin(03)-Ssm1d (75 aa).

An N-terminal signal peptide occupies residues 1–23; the sequence is MKLSMAILLVMALIIFTLDKNYS.

The protein belongs to the scoloptoxin-03 family. Post-translationally, contains 3 disulfide bonds. Expressed by the venom gland.

The protein localises to the secreted. Its function is as follows. Inhibits voltage-gated potassium channels. This Scolopendra mutilans (Chinese red-headed centipede) protein is Kappa-scoloptoxin(03)-Ssm1d.